We begin with the raw amino-acid sequence, 106 residues long: Integration host factor subunit alpha (106 aa).

The protein belongs to the bacterial histone-like protein family. As to quaternary structure, heterodimer of an alpha and a beta chain.

Its function is as follows. This protein is one of the two subunits of integration host factor, a specific DNA-binding protein that functions in genetic recombination as well as in transcriptional and translational control. The sequence is that of Integration host factor subunit alpha from Paramagnetospirillum magneticum (strain ATCC 700264 / AMB-1) (Magnetospirillum magneticum).